We begin with the raw amino-acid sequence, 119 residues long: UPF0102 protein CGSHiGG_01960 (119 aa).

Belongs to the UPF0102 family.

This is UPF0102 protein CGSHiGG_01960 from Haemophilus influenzae (strain PittGG).